The following is a 155-amino-acid chain: SsrA-binding protein (155 aa).

It belongs to the SmpB family.

It is found in the cytoplasm. Required for rescue of stalled ribosomes mediated by trans-translation. Binds to transfer-messenger RNA (tmRNA), required for stable association of tmRNA with ribosomes. tmRNA and SmpB together mimic tRNA shape, replacing the anticodon stem-loop with SmpB. tmRNA is encoded by the ssrA gene; the 2 termini fold to resemble tRNA(Ala) and it encodes a 'tag peptide', a short internal open reading frame. During trans-translation Ala-aminoacylated tmRNA acts like a tRNA, entering the A-site of stalled ribosomes, displacing the stalled mRNA. The ribosome then switches to translate the ORF on the tmRNA; the nascent peptide is terminated with the 'tag peptide' encoded by the tmRNA and targeted for degradation. The ribosome is freed to recommence translation, which seems to be the essential function of trans-translation. This Streptococcus equi subsp. zooepidemicus (strain MGCS10565) protein is SsrA-binding protein.